The chain runs to 44 residues: Photosystem I reaction center subunit IX (44 aa).

A helical membrane pass occupies residues 7 to 27 (YLSTVPVLTTLWFGSLAGLLI).

This sequence belongs to the PsaJ family.

It localises to the plastid. The protein localises to the chloroplast thylakoid membrane. In terms of biological role, may help in the organization of the PsaE and PsaF subunits. In Dioscorea elephantipes (Elephant's foot yam), this protein is Photosystem I reaction center subunit IX.